The primary structure comprises 557 residues: Formate--tetrahydrofolate ligase (557 aa).

Residue 65–72 coordinates ATP; it reads TPAGEGKT.

This sequence belongs to the formate--tetrahydrofolate ligase family.

The enzyme catalyses (6S)-5,6,7,8-tetrahydrofolate + formate + ATP = (6R)-10-formyltetrahydrofolate + ADP + phosphate. The protein operates within one-carbon metabolism; tetrahydrofolate interconversion. This chain is Formate--tetrahydrofolate ligase, found in Methylobacterium radiotolerans (strain ATCC 27329 / DSM 1819 / JCM 2831 / NBRC 15690 / NCIMB 10815 / 0-1).